Here is a 569-residue protein sequence, read N- to C-terminus: Ribonuclease J (569 aa).

H81, H83, D85, H86, H150, and D172 together coordinate Zn(2+). Substrate is bound at residue 373–377 (HASGH). H399 is a Zn(2+) binding site.

This sequence belongs to the metallo-beta-lactamase superfamily. RNA-metabolizing metallo-beta-lactamase-like family. Bacterial RNase J subfamily. As to quaternary structure, homodimer, may be a subunit of the RNA degradosome. Zn(2+) serves as cofactor.

It localises to the cytoplasm. In terms of biological role, an RNase that has 5'-3' exonuclease and possibly endoonuclease activity. Involved in maturation of rRNA and in some organisms also mRNA maturation and/or decay. The protein is Ribonuclease J of Mycoplasma pneumoniae (strain ATCC 29342 / M129 / Subtype 1) (Mycoplasmoides pneumoniae).